A 377-amino-acid chain; its full sequence is Stimulator of interferon genes protein 7 (377 aa).

4 helical membrane-spanning segments follow: residues 30–50, 57–77, 106–126, and 141–161; these read TAAITSAIIGVSSGAMLFLAV, THFLVFTAALLTLSFAFGELL, FTFDHGGCISLTAMFSALILC, and FAILFSVNCLVVPQLLFLVGL.

This sequence belongs to the STING family.

It is found in the membrane. Facilitator of innate immune signaling that acts as a sensor of second messenger signals produced by cyclic GMP-AMP synthase-like receptors (cGLRs) and promotes the production of type I interferon. Innate immune response is triggered in response to nucleotides from viruses and bacteria delivered to the cytoplasm. Acts by binding cyclic dinucleotides: recognizes and binds a large variety of 2'-3'- and 3'-3' linked cyclic dinucleotides (2'-3'-cGAMP, 3'-3'-cGAMP, 2',3'-cUAMP, 3',3'-cUAMP and/or 3',3'-c-di-GMP) second messengers produced by cGLRs in response to nucleotides in the cytosol, such as double-stranded RNA (dsRNA). Upon binding to cyclic dinucleotides, oligomerizes and promotes the recruitment and subsequent activation of the transcription factor IRF3 to induce expression of type I interferon. This Stylophora pistillata (Smooth cauliflower coral) protein is Stimulator of interferon genes protein 7.